Consider the following 455-residue polypeptide: N(5)-hydroxyornithine:cis-anhydromevalonyl coenzyme A-N(5)-transacylase SIDF (455 aa).

The PTS1-type peroxisomal targeting signal motif lies at 453–455; sequence PKL.

The protein belongs to the lysine N-acyltransferase mbtK family.

It localises to the peroxisome. It participates in siderophore biosynthesis. Hydroxyornithine transacylase; part of the gene cluster that mediates the biosynthesis of at least 11 siderophores, including beauverichelin A, dimerumic acid (DA), Na-dimethyl coprogen (NADC), eleutherazine B, ferricrocin (FC), fusarinine A, fusarinine C (FsC), metachelin A, mevalonolactone, rhodotorulic acid (RA) and tenellin. This cocktail of siderophores for iron metabolism is essential for virulence, and more specifically for the fungal virulence in penetrating through the host cuticle. Siderophore synthesis is also involved in conidial germination under iron-deficient conditions. For biosynthesis of fusarinine C, the transacylase SIDF transfers anhydromevalonyl to N(5)-hydroxyornithine. The required anhydromevalonyl-CoA moiety is derived from mevalonate by CoA ligation and dehydration catalyzed by SIDI and sidH respectively. The polypeptide is N(5)-hydroxyornithine:cis-anhydromevalonyl coenzyme A-N(5)-transacylase SIDF (Beauveria bassiana (strain ARSEF 2860) (White muscardine disease fungus)).